The chain runs to 37 residues: Cortex morphogenetic protein A (37 aa).

In terms of assembly, can form a complex with SpoIVA and ClpX.

It localises to the forespore. Its function is as follows. Ensures proper spore envelope assembly. Represses premature cortex assembly until coat assembly successfully initiates. Also participates in a quality-control pathway that selectively removes defective sporulating cells through regulated cell death. Acts as an adaptator that delivers SpoIVA to the ClpXP proteolytic machinery for degradation, specifically in cells that improperly assemble the spore envelope. In Bacillus subtilis (strain 168), this protein is Cortex morphogenetic protein A.